We begin with the raw amino-acid sequence, 250 residues long: DNA repair protein RecO (250 aa).

It belongs to the RecO family.

Functionally, involved in DNA repair and RecF pathway recombination. In Rhodopseudomonas palustris (strain ATCC BAA-98 / CGA009), this protein is DNA repair protein RecO.